A 248-amino-acid polypeptide reads, in one-letter code: Deoxyribose-phosphate aldolase (248 aa).

Catalysis depends on aspartate 117, which acts as the Proton donor/acceptor. Lysine 179 acts as the Schiff-base intermediate with acetaldehyde in catalysis. Catalysis depends on lysine 208, which acts as the Proton donor/acceptor.

The protein belongs to the DeoC/FbaB aldolase family. DeoC type 1 subfamily.

It is found in the cytoplasm. The enzyme catalyses 2-deoxy-D-ribose 5-phosphate = D-glyceraldehyde 3-phosphate + acetaldehyde. It participates in carbohydrate degradation; 2-deoxy-D-ribose 1-phosphate degradation; D-glyceraldehyde 3-phosphate and acetaldehyde from 2-deoxy-alpha-D-ribose 1-phosphate: step 2/2. Catalyzes a reversible aldol reaction between acetaldehyde and D-glyceraldehyde 3-phosphate to generate 2-deoxy-D-ribose 5-phosphate. This chain is Deoxyribose-phosphate aldolase, found in Thermotoga petrophila (strain ATCC BAA-488 / DSM 13995 / JCM 10881 / RKU-1).